Consider the following 379-residue polypeptide: Cytochrome b (379 aa).

Helical transmembrane passes span 33-53, 77-98, 113-133, and 178-198; these read FGSLLGACLIIQILTGLFLAM, WLIRYLHANGASMFFICLSIHA, WNIGIILFLTTMATAFVGYVL, and FFAFHFILPFIITAFVLVHLL. His83 and His97 together coordinate heme b. Positions 182 and 196 each coordinate heme b. His201 serves as a coordination point for a ubiquinone. 4 consecutive transmembrane segments (helical) span residues 226-246, 288-308, 320-340, and 347-367; these read IKDLLGVFLLLLALMILALFF, LGGVLALILSILILAAFPLLN, ITQTIYWIFIANLLVLTWIGG, and FTMIGQIASITYFAIILILMP.

This sequence belongs to the cytochrome b family. The cytochrome bc1 complex contains 11 subunits: 3 respiratory subunits (MT-CYB, CYC1 and UQCRFS1), 2 core proteins (UQCRC1 and UQCRC2) and 6 low-molecular weight proteins (UQCRH/QCR6, UQCRB/QCR7, UQCRQ/QCR8, UQCR10/QCR9, UQCR11/QCR10 and a cleavage product of UQCRFS1). This cytochrome bc1 complex then forms a dimer. It depends on heme b as a cofactor.

The protein localises to the mitochondrion inner membrane. Functionally, component of the ubiquinol-cytochrome c reductase complex (complex III or cytochrome b-c1 complex) that is part of the mitochondrial respiratory chain. The b-c1 complex mediates electron transfer from ubiquinol to cytochrome c. Contributes to the generation of a proton gradient across the mitochondrial membrane that is then used for ATP synthesis. This Thaptomys nigrita (Blackish grass mouse) protein is Cytochrome b (MT-CYB).